Here is a 116-residue protein sequence, read N- to C-terminus: Large ribosomal subunit protein bL20c (116 aa).

This sequence belongs to the bacterial ribosomal protein bL20 family.

The protein resides in the plastid. Its subcellular location is the chloroplast. Functionally, binds directly to 23S ribosomal RNA and is necessary for the in vitro assembly process of the 50S ribosomal subunit. It is not involved in the protein synthesizing functions of that subunit. The chain is Large ribosomal subunit protein bL20c from Cryptomeria japonica (Japanese cedar).